A 1370-amino-acid polypeptide reads, in one-letter code: DNA-directed RNA polymerase subunit beta (1370 aa).

This sequence belongs to the RNA polymerase beta chain family. In terms of assembly, the RNAP catalytic core consists of 2 alpha, 1 beta, 1 beta' and 1 omega subunit. When a sigma factor is associated with the core the holoenzyme is formed, which can initiate transcription.

The catalysed reaction is RNA(n) + a ribonucleoside 5'-triphosphate = RNA(n+1) + diphosphate. In terms of biological role, DNA-dependent RNA polymerase catalyzes the transcription of DNA into RNA using the four ribonucleoside triphosphates as substrates. This chain is DNA-directed RNA polymerase subunit beta, found in Verminephrobacter eiseniae (strain EF01-2).